The sequence spans 416 residues: Adenylosuccinate synthetase (416 aa).

Residues 13 to 19 (GDEGKGK) and 41 to 43 (GHT) each bind GTP. D14 (proton acceptor) is an active-site residue. Residues D14 and G41 each coordinate Mg(2+). Residues 14–17 (DEGK), 39–42 (NAGH), T126, R140, Q220, T235, and R299 contribute to the IMP site. H42 acts as the Proton donor in catalysis. Position 295–301 (295–301 (VSTGRKR)) interacts with substrate. GTP-binding positions include R301, 327–329 (KLD), and 405–407 (STS).

It belongs to the adenylosuccinate synthetase family. Homodimer. Requires Mg(2+) as cofactor.

It localises to the cytoplasm. The enzyme catalyses IMP + L-aspartate + GTP = N(6)-(1,2-dicarboxyethyl)-AMP + GDP + phosphate + 2 H(+). It participates in purine metabolism; AMP biosynthesis via de novo pathway; AMP from IMP: step 1/2. Plays an important role in the de novo pathway of purine nucleotide biosynthesis. Catalyzes the first committed step in the biosynthesis of AMP from IMP. In Campylobacter jejuni subsp. jejuni serotype O:6 (strain 81116 / NCTC 11828), this protein is Adenylosuccinate synthetase.